Reading from the N-terminus, the 49-residue chain is Large ribosomal subunit protein bL33B (49 aa).

It belongs to the bacterial ribosomal protein bL33 family.

This chain is Large ribosomal subunit protein bL33B, found in Lacticaseibacillus paracasei (strain ATCC 334 / BCRC 17002 / CCUG 31169 / CIP 107868 / KCTC 3260 / NRRL B-441) (Lactobacillus paracasei).